A 342-amino-acid polypeptide reads, in one-letter code: N-acetyl-gamma-glutamyl-phosphate reductase (342 aa).

C147 is a catalytic residue.

It belongs to the NAGSA dehydrogenase family. Type 1 subfamily.

It is found in the cytoplasm. The enzyme catalyses N-acetyl-L-glutamate 5-semialdehyde + phosphate + NADP(+) = N-acetyl-L-glutamyl 5-phosphate + NADPH + H(+). It functions in the pathway amino-acid biosynthesis; L-arginine biosynthesis; N(2)-acetyl-L-ornithine from L-glutamate: step 3/4. Catalyzes the NADPH-dependent reduction of N-acetyl-5-glutamyl phosphate to yield N-acetyl-L-glutamate 5-semialdehyde. The chain is N-acetyl-gamma-glutamyl-phosphate reductase from Campylobacter jejuni subsp. jejuni serotype O:6 (strain 81116 / NCTC 11828).